The following is a 260-amino-acid chain: Achaete-scute homolog 2 (260 aa).

Disordered regions lie at residues 85-126 (AGAC…RNER) and 191-239 (PATR…EDSS). Composition is skewed to low complexity over residues 110 to 121 (ATEASSSSAAVA) and 200 to 218 (TQPS…STSP). In terms of domain architecture, bHLH spans 118–170 (AAVARRNERERNRVKLVNLGFQALRQHVPHGGANKKLSKVETLRSAVEYIRAL).

Efficient DNA binding requires dimerization with another bHLH protein. Forms heterodimers with bHLH transcription factor TCF3. May not heterodimerise with bHLH protein HAND1. In terms of tissue distribution, expressed in Schwann cells in the peripheral nerve (at protein level). Also expressed by endothelial cells (at protein level). May be expressed in neuronal precursor cells.

The protein resides in the nucleus. The protein localises to the cytoplasm. In terms of biological role, transcription factor. Binds to E-box motifs 5'-CANNTG-3' in the regulatory elements of target genes, probably as a heterodimer with another basic helix-loop-helix (bHLH) protein such as the transcription factor TCF3. May bind both open and closed chromatin, acting as a pioneer transcription factor to allow other factors to bind and activate lineage-specific genes. Required during post-implantation development for the generation of some differentiated trophoblast cell types. Transcriptional activity of ASCL2 may be antagonised in a subset of trophoblast cells by bHLH transcription factor HAND1, perhaps by competing for dimerization with other bHLH proteins. Involved in differentiation and function of follicular T-helper (Tfh) cells, thereby playing a role in germinal center responses; probably modulates expression of genes involved in Tfh cell function, such as BCL6. May also act as a suppressor of Th1-, Th2- and Th17-cell differentiation. Induces the formation of stem cells in intestinal crypts in vitro, synergistically activating transcription of target genes, such as SOX9, together with TCF4/beta-catenin. May form a bistable transcriptional switch, controlling expression of its own gene together with Wnt/R-spondin signaling, and thereby maintaining stem cell characteristics. Modulates expression of target genes, including perhaps down-regulating EGR1/Krox24 and chemokine CXCL10/Mob-1 and up-regulating CXCR4 and CDKN1C/p57kip2, in Schwann cells. May play a role in reducing proliferation of Schwann cells, perhaps acting via modulation of expression of CDKN1C. May be dispensable for blastocyst formation and later embryonic function. May be involved in the determination of neuronal precursors. The protein is Achaete-scute homolog 2 (Ascl2) of Rattus norvegicus (Rat).